We begin with the raw amino-acid sequence, 660 residues long: Pseudouridylate synthase 7 homolog (660 aa).

The tract at residues 1-99 is disordered; the sequence is MEMTSTSLKR…EAGEEEEAES (99 aa). Position 7 is a phosphoserine (Ser-7). Over residues 22–32 the composition is skewed to basic and acidic residues; the sequence is TPHDETKKQKV. Positions 76–99 are enriched in acidic residues; it reads QEEEEEEEEEDGLSEAGEEEEAES. Ser-126 carries the post-translational modification Phosphoserine. The Nucleophile role is filled by Asp-293. Residues 369-579 enclose the TRUD domain; sequence GFINYYGMQR…SGAYRRIIIR (211 aa).

The protein belongs to the pseudouridine synthase TruD family. In terms of assembly, interacts with SIRT1.

It is found in the nucleus. The enzyme catalyses a uridine in tRNA = a pseudouridine in tRNA. It catalyses the reaction uridine(13) in tRNA = pseudouridine(13) in tRNA. It carries out the reaction a uridine in mRNA = a pseudouridine in mRNA. Functionally, pseudouridylate synthase that catalyzes pseudouridylation of RNAs. Acts as a regulator of protein synthesis in embryonic stem cells by mediating pseudouridylation of RNA fragments derived from tRNAs (tRFs): pseudouridylated tRFs inhibit translation by targeting the translation initiation complex. Also catalyzes pseudouridylation of mRNAs: mediates pseudouridylation of mRNAs with the consensus sequence 5'-UGUAG-3'. Acts as a regulator of pre-mRNA splicing by mediating pseudouridylation of pre-mRNAs at locations associated with alternatively spliced regions. Pseudouridylation of pre-mRNAs near splice sites directly regulates mRNA splicing and mRNA 3'-end processing. In addition to mRNAs and tRNAs, binds other types of RNAs, such as snRNAs, Y RNAs and vault RNAs, suggesting that it can catalyze pseudouridylation of many RNA types. The polypeptide is Pseudouridylate synthase 7 homolog (Mus musculus (Mouse)).